We begin with the raw amino-acid sequence, 175 residues long: NADH-ubiquinone oxidoreductase chain 6 (175 aa).

Transmembrane regions (helical) follow at residues 1–21 (MMLYIVFILSVIFVMGFVGFS), 25–45 (SPIYGGLGLIVSGGVGCGIVL), 47–67 (FGGSFLGLMVFLIYLGGMMVV), 88–108 (AVLGAFVTGLLMEFFMVYYVL), and 149–169 (YGTWLVIVTGWSLLIGVVVIM).

This sequence belongs to the complex I subunit 6 family. Core subunit of respiratory chain NADH dehydrogenase (Complex I) which is composed of 45 different subunits.

The protein resides in the mitochondrion inner membrane. It carries out the reaction a ubiquinone + NADH + 5 H(+)(in) = a ubiquinol + NAD(+) + 4 H(+)(out). In terms of biological role, core subunit of the mitochondrial membrane respiratory chain NADH dehydrogenase (Complex I) which catalyzes electron transfer from NADH through the respiratory chain, using ubiquinone as an electron acceptor. Essential for the catalytic activity and assembly of complex I. This is NADH-ubiquinone oxidoreductase chain 6 (MT-ND6) from Bos indicus (Zebu).